Here is a 370-residue protein sequence, read N- to C-terminus: Divinyl chlorophyll a/b light-harvesting protein PcbD (370 aa).

The next 6 membrane-spanning stretches (helical) occupy residues 27–47 (FIAS…GSTL), 88–108 (VAAV…GALL), 140–160 (FILG…VEWA), 201–221 (VMGG…IHMV), 248–268 (AVLS…AFWA), and 315–335 (LVNV…WHAL).

It belongs to the PsbB/PsbC family. IsiA/Pcb subfamily. The antenna complex consists of divinyl chlorophylls (a and b) and divinyl chlorophyll a/b binding proteins and binds more divinyl chlorophyll b than does the antenna complex from high-light-adapted Prochlorococcus. Divinyl chlorophyll a is required as a cofactor. Divinyl chlorophyll b serves as cofactor.

The protein localises to the cellular thylakoid membrane. In terms of biological role, the antenna complex functions as a light receptor, it captures and delivers excitation energy to photosystems II and I. The Prochlorales pcb genes are not related to higher plant LHCs. This is Divinyl chlorophyll a/b light-harvesting protein PcbD (pcbD) from Prochlorococcus marinus (strain NATL2A).